The chain runs to 221 residues: uncharacterized protein (221 aa).

The next 4 membrane-spanning stretches (helical) occupy residues 41-63 (TGNI…HSLI), 78-100 (AVMY…SSLS), 141-163 (ILAY…ISFL), and 178-200 (LILR…VNLF).

The protein localises to the cell membrane. This is an uncharacterized protein from Archaeoglobus fulgidus (strain ATCC 49558 / DSM 4304 / JCM 9628 / NBRC 100126 / VC-16).